Reading from the N-terminus, the 344-residue chain is Uroporphyrinogen decarboxylase (344 aa).

Residues 26–30 (RQAGR), Phe-45, Asp-75, Tyr-151, Ser-206, and His-320 each bind substrate.

It belongs to the uroporphyrinogen decarboxylase family. As to quaternary structure, homodimer.

The protein localises to the cytoplasm. The catalysed reaction is uroporphyrinogen III + 4 H(+) = coproporphyrinogen III + 4 CO2. It participates in porphyrin-containing compound metabolism; protoporphyrin-IX biosynthesis; coproporphyrinogen-III from 5-aminolevulinate: step 4/4. Catalyzes the decarboxylation of four acetate groups of uroporphyrinogen-III to yield coproporphyrinogen-III. The chain is Uroporphyrinogen decarboxylase from Staphylococcus saprophyticus subsp. saprophyticus (strain ATCC 15305 / DSM 20229 / NCIMB 8711 / NCTC 7292 / S-41).